Consider the following 148-residue polypeptide: Cysteine proteinase inhibitor 5 (148 aa).

A signal peptide spans 1–25 (MASKLYYAVAPLVLVLLLLAPLSSA). The Secondary area of contact signature appears at 99–103 (QVVSG).

It belongs to the cystatin family. Phytocystatin subfamily.

Its subcellular location is the secreted. Functionally, specific inhibitor of cysteine proteinases. Probably involved in the regulation of endogenous processes and in defense against pests and pathogens. The sequence is that of Cysteine proteinase inhibitor 5 from Oryza sativa subsp. japonica (Rice).